We begin with the raw amino-acid sequence, 548 residues long: CTP synthase (548 aa).

The amidoligase domain stretch occupies residues 1–267 (MKTKFIFITG…DQKIAIMLQL (267 aa)). Ser14 contacts CTP. Position 14 (Ser14) interacts with UTP. Residues 15–20 (SLGKGL) and Asp72 contribute to the ATP site. Residues Asp72 and Glu141 each contribute to the Mg(2+) site. Residues 148 to 150 (DIE), 188 to 193 (KTKPTQ), and Lys224 each bind CTP. UTP is bound by residues 188–193 (KTKPTQ) and Lys224. One can recognise a Glutamine amidotransferase type-1 domain in the interval 292–545 (TIGIVGKYVD…IKAAGKQAVK (254 aa)). Gly354 lines the L-glutamine pocket. The Nucleophile; for glutamine hydrolysis role is filled by Cys381. L-glutamine-binding positions include 382-385 (LGMQ), Glu405, and Arg473. Catalysis depends on residues His518 and Glu520.

It belongs to the CTP synthase family. Homotetramer.

The catalysed reaction is UTP + L-glutamine + ATP + H2O = CTP + L-glutamate + ADP + phosphate + 2 H(+). It catalyses the reaction L-glutamine + H2O = L-glutamate + NH4(+). It carries out the reaction UTP + NH4(+) + ATP = CTP + ADP + phosphate + 2 H(+). It participates in pyrimidine metabolism; CTP biosynthesis via de novo pathway; CTP from UDP: step 2/2. With respect to regulation, allosterically activated by GTP, when glutamine is the substrate; GTP has no effect on the reaction when ammonia is the substrate. The allosteric effector GTP functions by stabilizing the protein conformation that binds the tetrahedral intermediate(s) formed during glutamine hydrolysis. Inhibited by the product CTP, via allosteric rather than competitive inhibition. Catalyzes the ATP-dependent amination of UTP to CTP with either L-glutamine or ammonia as the source of nitrogen. Regulates intracellular CTP levels through interactions with the four ribonucleotide triphosphates. In Oleidesulfovibrio alaskensis (strain ATCC BAA-1058 / DSM 17464 / G20) (Desulfovibrio alaskensis), this protein is CTP synthase.